We begin with the raw amino-acid sequence, 278 residues long: Large ribosomal subunit protein uL2 (278 aa).

Disordered regions lie at residues 1 to 58 (MAIR…GGGH) and 225 to 278 (VMNP…KNKR). Over residues 37–58 (LHGRGGRNAHGRITTRHKGGGH) the composition is skewed to basic residues. Over residues 253 to 267 (PEGRTRKNKASDKMI) the composition is skewed to basic and acidic residues. Positions 268–278 (VRRRRTGKNKR) are enriched in basic residues.

It belongs to the universal ribosomal protein uL2 family. Part of the 50S ribosomal subunit. Forms a bridge to the 30S subunit in the 70S ribosome.

Its function is as follows. One of the primary rRNA binding proteins. Required for association of the 30S and 50S subunits to form the 70S ribosome, for tRNA binding and peptide bond formation. It has been suggested to have peptidyltransferase activity; this is somewhat controversial. Makes several contacts with the 16S rRNA in the 70S ribosome. The protein is Large ribosomal subunit protein uL2 of Rhodococcus erythropolis (strain PR4 / NBRC 100887).